The chain runs to 152 residues: UPF0225 protein YchJ (152 aa).

This sequence belongs to the UPF0225 family.

The polypeptide is UPF0225 protein YchJ (Escherichia coli O17:K52:H18 (strain UMN026 / ExPEC)).